The following is a 231-amino-acid chain: NADH-ubiquinone oxidoreductase chain 4 (231 aa).

Helical transmembrane passes span 1-21 (PIAG…YGII), 34-54 (MFLP…LTCL), 62-84 (LIAY…QTPW), 89-111 (AMAL…NTTY), 128-148 (ILPM…AIPP), and 169-189 (TIIM…HMFL).

Belongs to the complex I subunit 4 family.

Its subcellular location is the mitochondrion membrane. It catalyses the reaction a ubiquinone + NADH + 5 H(+)(in) = a ubiquinol + NAD(+) + 4 H(+)(out). Functionally, core subunit of the mitochondrial membrane respiratory chain NADH dehydrogenase (Complex I) that is believed to belong to the minimal assembly required for catalysis. Complex I functions in the transfer of electrons from NADH to the respiratory chain. The immediate electron acceptor for the enzyme is believed to be ubiquinone. This is NADH-ubiquinone oxidoreductase chain 4 (MT-ND4) from Bothrops erythromelas (Caatinga lance head).